We begin with the raw amino-acid sequence, 257 residues long: Ribonuclease HII (257 aa).

One can recognise an RNase H type-2 domain in the interval 72–257 (TYIAGIDEVG…FAPIKDMIQK (186 aa)). Positions 78, 79, and 170 each coordinate a divalent metal cation.

Belongs to the RNase HII family. The cofactor is Mn(2+). Requires Mg(2+) as cofactor.

The protein resides in the cytoplasm. It catalyses the reaction Endonucleolytic cleavage to 5'-phosphomonoester.. Functionally, endonuclease that specifically degrades the RNA of RNA-DNA hybrids. The chain is Ribonuclease HII from Bacillus mycoides (strain KBAB4) (Bacillus weihenstephanensis).